A 366-amino-acid chain; its full sequence is NADH-quinone oxidoreductase subunit D (366 aa).

Belongs to the complex I 49 kDa subunit family. As to quaternary structure, NDH-1 is composed of 14 different subunits. Subunits NuoB, C, D, E, F, and G constitute the peripheral sector of the complex.

The protein resides in the cell membrane. It catalyses the reaction a quinone + NADH + 5 H(+)(in) = a quinol + NAD(+) + 4 H(+)(out). In terms of biological role, NDH-1 shuttles electrons from NADH, via FMN and iron-sulfur (Fe-S) centers, to quinones in the respiratory chain. The immediate electron acceptor for the enzyme in this species is believed to be a menaquinone. Couples the redox reaction to proton translocation (for every two electrons transferred, four hydrogen ions are translocated across the cytoplasmic membrane), and thus conserves the redox energy in a proton gradient. The polypeptide is NADH-quinone oxidoreductase subunit D (Bacillus thuringiensis (strain Al Hakam)).